A 179-amino-acid chain; its full sequence is Large ribosomal subunit protein uL5 (179 aa).

An N6-acetyllysine modification is found at Lys-3.

This sequence belongs to the universal ribosomal protein uL5 family. As to quaternary structure, part of the 50S ribosomal subunit; part of the 5S rRNA/L5/L18/L25 subcomplex. Contacts the 5S rRNA and the P site tRNA. Forms a bridge to the 30S subunit in the 70S ribosome.

This is one of the proteins that bind and probably mediate the attachment of the 5S RNA into the large ribosomal subunit, where it forms part of the central protuberance. In the 70S ribosome it contacts protein S13 of the 30S subunit (bridge B1b), connecting the 2 subunits; this bridge is implicated in subunit movement. Contacts the P site tRNA; the 5S rRNA and some of its associated proteins might help stabilize positioning of ribosome-bound tRNAs. The chain is Large ribosomal subunit protein uL5 from Shigella flexneri.